The primary structure comprises 154 residues: Superoxide dismutase [Cu-Zn] (154 aa).

Residues His-47, His-49, and His-64 each coordinate Cu cation. Cys-58 and Cys-147 are joined by a disulfide. His-64, His-72, His-81, and Asp-84 together coordinate Zn(2+). His-121 lines the Cu cation pocket. Residue Arg-144 coordinates substrate.

This sequence belongs to the Cu-Zn superoxide dismutase family. Homodimer. Requires Cu cation as cofactor. The cofactor is Zn(2+).

It localises to the cytoplasm. It catalyses the reaction 2 superoxide + 2 H(+) = H2O2 + O2. In terms of biological role, destroys radicals which are normally produced within the cells and which are toxic to biological systems. The sequence is that of Superoxide dismutase [Cu-Zn] (SOD1) from Eremothecium gossypii (strain ATCC 10895 / CBS 109.51 / FGSC 9923 / NRRL Y-1056) (Yeast).